Consider the following 240-residue polypeptide: 1-(5-phosphoribosyl)-5-[(5-phosphoribosylamino)methylideneamino] imidazole-4-carboxamide isomerase (240 aa).

The active-site Proton acceptor is the aspartate 10. The Proton donor role is filled by aspartate 132.

This sequence belongs to the HisA/HisF family.

Its subcellular location is the cytoplasm. It catalyses the reaction 1-(5-phospho-beta-D-ribosyl)-5-[(5-phospho-beta-D-ribosylamino)methylideneamino]imidazole-4-carboxamide = 5-[(5-phospho-1-deoxy-D-ribulos-1-ylimino)methylamino]-1-(5-phospho-beta-D-ribosyl)imidazole-4-carboxamide. Its pathway is amino-acid biosynthesis; L-histidine biosynthesis; L-histidine from 5-phospho-alpha-D-ribose 1-diphosphate: step 4/9. This is 1-(5-phosphoribosyl)-5-[(5-phosphoribosylamino)methylideneamino] imidazole-4-carboxamide isomerase from Methanocella arvoryzae (strain DSM 22066 / NBRC 105507 / MRE50).